A 430-amino-acid chain; its full sequence is Serine--tRNA ligase (430 aa).

236–238 (TAE) contacts L-serine. Residue 267 to 269 (RSE) participates in ATP binding. Glu-290 provides a ligand contact to L-serine. 354 to 357 (EISS) is a binding site for ATP. Ser-390 contacts L-serine.

It belongs to the class-II aminoacyl-tRNA synthetase family. Type-1 seryl-tRNA synthetase subfamily. As to quaternary structure, homodimer. The tRNA molecule binds across the dimer.

Its subcellular location is the cytoplasm. It catalyses the reaction tRNA(Ser) + L-serine + ATP = L-seryl-tRNA(Ser) + AMP + diphosphate + H(+). The enzyme catalyses tRNA(Sec) + L-serine + ATP = L-seryl-tRNA(Sec) + AMP + diphosphate + H(+). It participates in aminoacyl-tRNA biosynthesis; selenocysteinyl-tRNA(Sec) biosynthesis; L-seryl-tRNA(Sec) from L-serine and tRNA(Sec): step 1/1. Catalyzes the attachment of serine to tRNA(Ser). Is also able to aminoacylate tRNA(Sec) with serine, to form the misacylated tRNA L-seryl-tRNA(Sec), which will be further converted into selenocysteinyl-tRNA(Sec). The polypeptide is Serine--tRNA ligase (Idiomarina loihiensis (strain ATCC BAA-735 / DSM 15497 / L2-TR)).